Consider the following 283-residue polypeptide: Chromatin modification-related protein png1 (283 aa).

Residues 137–171 (YSPSGASSARQTPAPSRSGASTAGRRRTSATTRGA) are compositionally biased toward low complexity. Residues 137-224 (YSPSGASSAR…NEMVSEEDME (88 aa)) form a disordered region. Positions 181–216 (YTASLADSGSTRGQKVSNATATTQLETKADSTTPNE) are enriched in polar residues. A PHD-type zinc finger spans residues 228–277 (EKYCFCQQGSYGQMVACDNANCEREWFHMECVGLKAPPEGTWYCEACRDQ). Residues C231, C233, C244, C249, H255, C258, C271, and C274 each contribute to the Zn(2+) site.

This sequence belongs to the ING family. As to quaternary structure, interacts with H3K4me3 and to a lesser extent with H3K4me2. Component of a histone deacetylase complex.

The protein localises to the nucleus. In terms of biological role, component of a histone deacetylase complex responsible for the deacetylation of lysine residues on the N-terminal part of the core histones (H2A, H2B, H3 and H4). Histone deacetylation gives a tag for epigenetic repression and plays an important role in transcriptional regulation, cell cycle progression and developmental events. Has a role in silencing of mating type genes. This chain is Chromatin modification-related protein png1 (png1), found in Schizosaccharomyces pombe (strain 972 / ATCC 24843) (Fission yeast).